The sequence spans 132 residues: Large ribosomal subunit protein uL24 (132 aa).

Belongs to the universal ribosomal protein uL24 family. As to quaternary structure, part of the 50S ribosomal subunit.

In terms of biological role, one of two assembly initiator proteins, it binds directly to the 5'-end of the 23S rRNA, where it nucleates assembly of the 50S subunit. Its function is as follows. Located at the polypeptide exit tunnel on the outside of the subunit. The chain is Large ribosomal subunit protein uL24 from Aeropyrum pernix (strain ATCC 700893 / DSM 11879 / JCM 9820 / NBRC 100138 / K1).